Consider the following 285-residue polypeptide: MSQLKPQEVVRLGDIQMANHLPFVLFGGMNVLESKDLAFEIAETYIDICKRLDIPYVFKASFDKANRSSLHSFRGPGLEKGIEWLGDIKKHFNVPIITDVHEPYQAAPVAEVADIIQLPAFLSRQTDLVEAMAKTQAIINIKKAQFLAPHEMRHILHKCLEAGNDKLILCERGSAFGYNNLVVDMLGFDIMKEMNVPVFFDVTHALQTPGGRSDSAGGRRAQITTLARAGMATGLAGLFLESHPDPDKAKCDGPSALRLSQLEPFLAQLKELDTLVKGFKKLDTH.

The protein belongs to the KdsA family.

Its subcellular location is the cytoplasm. It carries out the reaction D-arabinose 5-phosphate + phosphoenolpyruvate + H2O = 3-deoxy-alpha-D-manno-2-octulosonate-8-phosphate + phosphate. The protein operates within carbohydrate biosynthesis; 3-deoxy-D-manno-octulosonate biosynthesis; 3-deoxy-D-manno-octulosonate from D-ribulose 5-phosphate: step 2/3. Its pathway is bacterial outer membrane biogenesis; lipopolysaccharide biosynthesis. In Acinetobacter baumannii (strain AB307-0294), this protein is 2-dehydro-3-deoxyphosphooctonate aldolase.